The primary structure comprises 98 residues: NADH-ubiquinone oxidoreductase chain 4L (98 aa).

The next 3 helical transmembrane spans lie at 1 to 21 (MTPLNINLTMAFFLALAGVLI), 28 to 48 (STLLCLEGMMLSLFILLSLLI), and 59 to 79 (APLILLVFSACEAGVGLALLV).

The protein belongs to the complex I subunit 4L family. As to quaternary structure, core subunit of respiratory chain NADH dehydrogenase (Complex I) which is composed of 45 different subunits.

The protein resides in the mitochondrion inner membrane. The enzyme catalyses a ubiquinone + NADH + 5 H(+)(in) = a ubiquinol + NAD(+) + 4 H(+)(out). In terms of biological role, core subunit of the mitochondrial membrane respiratory chain NADH dehydrogenase (Complex I) which catalyzes electron transfer from NADH through the respiratory chain, using ubiquinone as an electron acceptor. Part of the enzyme membrane arm which is embedded in the lipid bilayer and involved in proton translocation. The sequence is that of NADH-ubiquinone oxidoreductase chain 4L (MT-ND4L) from Tarsipes rostratus (Honey possum).